The chain runs to 1323 residues: Sister chromatid cohesion protein PDS5 homolog A-A (1323 aa).

An HEAT repeat occupies 385-421; it reads FLVNDQLLGFVRERTLDKRWRVRKEAMMGLAQLYKKY. The disordered stretch occupies residues 1139–1323; that stretch reads LNATGRRPYS…TAQRQIDLHR (185 aa). Residues 1153–1165 are compositionally biased toward low complexity; that stretch reads SEISNNVSINSES. 2 stretches are compositionally biased toward polar residues: residues 1166–1176 and 1210–1220; these read DASVANRQSSE and LDQTAPSNTGT. Basic and acidic residues predominate over residues 1235–1246; the sequence is NIRKESEEKKAD.

As to quaternary structure, interacts with the cohesin complex. Binds chromatin in a cohesin-dependent manner.

It localises to the nucleus. Functionally, may regulate sister chromatid cohesion during mitosis and couple it to DNA replication. The sequence is that of Sister chromatid cohesion protein PDS5 homolog A-A (pds5a-a) from Xenopus laevis (African clawed frog).